The following is a 57-amino-acid chain: MAVPKRRTSKKVKNQRRTHKKLHVPGMVECSNCGELTKPHRVCKSCGHYDGKEVVNG.

The tract at residues 1–21 is disordered; sequence MAVPKRRTSKKVKNQRRTHKK.

Belongs to the bacterial ribosomal protein bL32 family.

This Oceanobacillus iheyensis (strain DSM 14371 / CIP 107618 / JCM 11309 / KCTC 3954 / HTE831) protein is Large ribosomal subunit protein bL32.